Consider the following 576-residue polypeptide: Arginine--tRNA ligase (576 aa).

The short motif at 122–132 (PNVAKQMHVGH) is the 'HIGH' region element.

This sequence belongs to the class-I aminoacyl-tRNA synthetase family. In terms of assembly, monomer.

The protein localises to the cytoplasm. It carries out the reaction tRNA(Arg) + L-arginine + ATP = L-arginyl-tRNA(Arg) + AMP + diphosphate. This Yersinia pseudotuberculosis serotype O:3 (strain YPIII) protein is Arginine--tRNA ligase.